Consider the following 279-residue polypeptide: Ribosomal RNA small subunit methyltransferase A (279 aa).

Positions 10, 12, 37, 58, 83, and 108 each coordinate S-adenosyl-L-methionine.

It belongs to the class I-like SAM-binding methyltransferase superfamily. rRNA adenine N(6)-methyltransferase family. RsmA subfamily.

The protein localises to the cytoplasm. It carries out the reaction adenosine(1518)/adenosine(1519) in 16S rRNA + 4 S-adenosyl-L-methionine = N(6)-dimethyladenosine(1518)/N(6)-dimethyladenosine(1519) in 16S rRNA + 4 S-adenosyl-L-homocysteine + 4 H(+). In terms of biological role, specifically dimethylates two adjacent adenosines (A1518 and A1519) in the loop of a conserved hairpin near the 3'-end of 16S rRNA in the 30S particle. May play a critical role in biogenesis of 30S subunits. The protein is Ribosomal RNA small subunit methyltransferase A of Synechococcus elongatus (strain ATCC 33912 / PCC 7942 / FACHB-805) (Anacystis nidulans R2).